The following is a 241-amino-acid chain: Large ribosomal subunit protein uL1 (241 aa).

The protein belongs to the universal ribosomal protein uL1 family. As to quaternary structure, part of the 50S ribosomal subunit.

Its function is as follows. Binds directly to 23S rRNA. The L1 stalk is quite mobile in the ribosome, and is involved in E site tRNA release. Protein L1 is also a translational repressor protein, it controls the translation of the L11 operon by binding to its mRNA. This is Large ribosomal subunit protein uL1 from Streptomyces avermitilis (strain ATCC 31267 / DSM 46492 / JCM 5070 / NBRC 14893 / NCIMB 12804 / NRRL 8165 / MA-4680).